A 1079-amino-acid polypeptide reads, in one-letter code: Error-prone DNA polymerase (1079 aa).

It belongs to the DNA polymerase type-C family. DnaE2 subfamily.

It is found in the cytoplasm. It carries out the reaction DNA(n) + a 2'-deoxyribonucleoside 5'-triphosphate = DNA(n+1) + diphosphate. DNA polymerase involved in damage-induced mutagenesis and translesion synthesis (TLS). It is not the major replicative DNA polymerase. The polypeptide is Error-prone DNA polymerase (Ralstonia pickettii (strain 12J)).